A 483-amino-acid chain; its full sequence is Essential nuclear protein 1 (483 aa).

Disordered stretches follow at residues 1 to 21 (MARA…LKDL), 33 to 55 (KKKL…GYID), 67 to 123 (KEQQ…EGDY), and 171 to 200 (ESQV…GLKS). Over residues 96-123 (YDDEDEDEDEDEEAFGEDISDFEPEGDY) the composition is skewed to acidic residues. S172 carries the post-translational modification Phosphoserine; by ATM or ATR. The span at 174–183 (VEDMQDDEPL) shows a compositional bias: acidic residues. The span at 185-198 (NEQNTSRGNISSGL) shows a compositional bias: polar residues. Phosphoserine is present on residues S190 and S404.

The protein belongs to the bystin family.

The protein localises to the cytoplasm. Its subcellular location is the nucleus. It is found in the nucleolus. Its function is as follows. Required for normal export of the pre-40S particles from the nucleus to the cytoplasm. Its subcellular location and association with pre-40S subunit shifts from mixed cytoplasm/nucleus to all nuclear in RPS19 disruptions, suggesting it acts after the ribosomal protein. The chain is Essential nuclear protein 1 (ENP1) from Saccharomyces cerevisiae (strain ATCC 204508 / S288c) (Baker's yeast).